Reading from the N-terminus, the 613-residue chain is MAAAAASPSPATPPRILLAGDANGRLHQLFKRVTSVNQSTGPFHALLCVGQFFSPDAGDGDGGGGGEVADYLEGRAAVPIPTYFTGDYGPAAPRLLAKAASSARGFSPGGIQICPNLFWLRGSARFTLHGLSVVYLSGRKGPGGPGCYSQDDVDALRALAEEPGIVDLFLTNEWPAGVVNGVDTSNAPSQISDPHGYDPVVAELVAEIKPRYHIAGSKGVFYAREPYVSDSAAHVTRFIGLANVGNKEKQKFIHAISPTPASTMSSVDIHARPPNTTLSPYISPAKSVPVEETPKRPAEDADLQYWRYDVKKQRHGEAGGNRLCFKFTSSGSCPRGSKCNYRHDEEAREHYNRNVCFDFLNKGKCEKGPECRFAHSLSDEGAVRDTKPRSERRRVESSCWFCLSSPDVESHLVISIGEGYYCALAKGPLVPNHVLVIPVEHCSSTLKMPVEAEAELGRYKDALAKYFEKQGKIAIYFEWVSQQSRHANLQAVPVPLSKASSVKKIFHLAAQRLGFEFSVVNPDGDANRARELLRSECDSKSSLFYVELPEGSVLLHLVDSNEKFPAQFGREVLAGLLSMADRADWRNCKVSKEEEIQMVDDFKQGFREFDPAE.

The interval asparagine 275–arginine 296 is disordered. 2 C3H1-type zinc fingers span residues alanine 318 to glutamate 346 and histidine 350 to serine 378.

This Oryza sativa subsp. japonica (Rice) protein is Zinc finger CCCH domain-containing protein 59.